The primary structure comprises 411 residues: Exodeoxyribonuclease 7 large subunit (411 aa).

This sequence belongs to the XseA family. In terms of assembly, heterooligomer composed of large and small subunits.

The protein resides in the cytoplasm. The catalysed reaction is Exonucleolytic cleavage in either 5'- to 3'- or 3'- to 5'-direction to yield nucleoside 5'-phosphates.. In terms of biological role, bidirectionally degrades single-stranded DNA into large acid-insoluble oligonucleotides, which are then degraded further into small acid-soluble oligonucleotides. The polypeptide is Exodeoxyribonuclease 7 large subunit (Mycobacterium sp. (strain KMS)).